The chain runs to 65 residues: Large ribosomal subunit protein bL35 (65 aa).

Positions 1–28 are disordered; it reads MPKIKTNRGAAKRFRKTGSGKIRRNKAF. Over residues 10-26 the composition is skewed to basic residues; it reads AAKRFRKTGSGKIRRNK.

The protein belongs to the bacterial ribosomal protein bL35 family.

The chain is Large ribosomal subunit protein bL35 from Syntrophotalea carbinolica (strain DSM 2380 / NBRC 103641 / GraBd1) (Pelobacter carbinolicus).